The following is a 464-amino-acid chain: Probable 1,4-beta-D-glucan cellobiohydrolase C (464 aa).

The N-terminal stretch at 1 to 19 is a signal peptide; the sequence is MKNFAPSLALSLLLPTVQA. The CBM1 domain maps to 20–55; sequence QQTMWGQCGGAGWSGATDCVAGGVCSTQNAYYAQCL. 2 disulfide bridges follow: Cys27-Cys44 and Cys38-Cys54. A thr-rich linker region spans residues 59–102; the sequence is TTATTLSTTSKGTTTTTTSSTTSTGGGSSSTTTKTSTSAGPTVT. The span at 65 to 100 shows a compositional bias: low complexity; that stretch reads STTSKGTTTTTTSSTTSTGGGSSSTTTKTSTSAGPT. The disordered stretch occupies residues 65 to 108; the sequence is STTSKGTTTTTTSSTTSTGGGSSSTTTKTSTSAGPTVTGSPSGN. A catalytic region spans residues 103-464; it reads GSPSGNPFSG…QLLTNANPAF (362 aa). Asp194 is a catalytic residue. Cystine bridges form between Cys195/Cys254 and Cys386/Cys433. The active-site Proton donor is Asp240. Asp419 (nucleophile) is an active-site residue.

Belongs to the glycosyl hydrolase 6 (cellulase B) family.

It localises to the secreted. It carries out the reaction Hydrolysis of (1-&gt;4)-beta-D-glucosidic linkages in cellulose and cellotetraose, releasing cellobiose from the non-reducing ends of the chains.. The biological conversion of cellulose to glucose generally requires three types of hydrolytic enzymes: (1) Endoglucanases which cut internal beta-1,4-glucosidic bonds; (2) Exocellobiohydrolases that cut the disaccharide cellobiose from the non-reducing end of the cellulose polymer chain; (3) Beta-1,4-glucosidases which hydrolyze the cellobiose and other short cello-oligosaccharides to glucose. This is Probable 1,4-beta-D-glucan cellobiohydrolase C (cbhC) from Aspergillus clavatus (strain ATCC 1007 / CBS 513.65 / DSM 816 / NCTC 3887 / NRRL 1 / QM 1276 / 107).